Here is a 219-residue protein sequence, read N- to C-terminus: Uracil-DNA glycosylase (219 aa).

Asp-61 (proton acceptor) is an active-site residue.

The protein belongs to the uracil-DNA glycosylase (UDG) superfamily. UNG family.

Its subcellular location is the cytoplasm. The catalysed reaction is Hydrolyzes single-stranded DNA or mismatched double-stranded DNA and polynucleotides, releasing free uracil.. Functionally, excises uracil residues from the DNA which can arise as a result of misincorporation of dUMP residues by DNA polymerase or due to deamination of cytosine. The polypeptide is Uracil-DNA glycosylase (Neisseria meningitidis serogroup B (strain ATCC BAA-335 / MC58)).